We begin with the raw amino-acid sequence, 150 residues long: 3-hydroxyacyl-[acyl-carrier-protein] dehydratase FabZ (150 aa).

Histidine 54 is a catalytic residue.

The protein belongs to the thioester dehydratase family. FabZ subfamily.

It is found in the cytoplasm. The enzyme catalyses a (3R)-hydroxyacyl-[ACP] = a (2E)-enoyl-[ACP] + H2O. In terms of biological role, involved in unsaturated fatty acids biosynthesis. Catalyzes the dehydration of short chain beta-hydroxyacyl-ACPs and long chain saturated and unsaturated beta-hydroxyacyl-ACPs. The protein is 3-hydroxyacyl-[acyl-carrier-protein] dehydratase FabZ of Aliivibrio fischeri (strain ATCC 700601 / ES114) (Vibrio fischeri).